The primary structure comprises 193 residues: Recombination protein RecR (193 aa).

The C4-type zinc-finger motif lies at 61-76 (CASCNALSESEICEIC). The Toprim domain occupies 84–170 (SQLCMVLHPR…TFTKIAQGVP (87 aa)).

The protein belongs to the RecR family.

Functionally, may play a role in DNA repair. It seems to be involved in an RecBC-independent recombinational process of DNA repair. It may act with RecF and RecO. In Helicobacter pylori (strain Shi470), this protein is Recombination protein RecR.